The sequence spans 1155 residues: DNA-directed RNA polymerase subunit beta (1155 aa).

This sequence belongs to the RNA polymerase beta chain family. In terms of assembly, the RNAP catalytic core consists of 2 alpha, 1 beta, 1 beta' and 1 omega subunit. When a sigma factor is associated with the core the holoenzyme is formed, which can initiate transcription.

It carries out the reaction RNA(n) + a ribonucleoside 5'-triphosphate = RNA(n+1) + diphosphate. Its function is as follows. DNA-dependent RNA polymerase catalyzes the transcription of DNA into RNA using the four ribonucleoside triphosphates as substrates. The chain is DNA-directed RNA polymerase subunit beta from Borrelia hermsii (strain HS1 / DAH).